The sequence spans 1023 residues: Sodium/potassium-transporting ATPase subunit alpha-1 (1023 aa).

The propeptide occupies 1–5; it reads MGKGV. Over residues 1–11 the composition is skewed to basic and acidic residues; sequence MGKGVGRDKYE. A disordered region spans residues 1 to 38; that stretch reads MGKGVGRDKYEPAAVSEHGDKKGKKAKKERDMDELKKE. At 6–87 the chain is on the cytoplasmic side; the sequence is GRDKYEPAAV…NALTPPPTTP (82 aa). K9 bears the N6-acetyllysine mark. A Phosphotyrosine modification is found at Y10. S16 carries the phosphoserine; by PKC modification. N6-acetyllysine is present on K21. Residues 28 to 38 show a composition bias toward basic and acidic residues; sequence KERDMDELKKE. Phosphoserine occurs at positions 40 and 47. Residues 82 to 84 form a phosphoinositide-3 kinase binding region; sequence PPP. The chain crosses the membrane as a helical span at residues 88 to 108; the sequence is EWVKFCRQLFGGFSMLLWIGA. The Extracellular portion of the chain corresponds to 109-131; the sequence is ILCFLAYGILAATEEDFDNDNLY. Residues 132–152 traverse the membrane as a helical segment; sequence LGVVLAAVVIITGCFSYYQEA. At 153–288 the chain is on the cytoplasmic side; that stretch reads KSSKIMESFK…GGQTPIAAEI (136 aa). Residues 216–235 are disordered; that stretch reads SSLTGESEPQTRSPDFTNEN. S228 is subject to Phosphoserine. Position 260 is a phosphotyrosine (Y260). A helical membrane pass occupies residues 289-308; sequence EHFIHIITGVAVFLGVSFFI. Residues 309–320 are Extracellular-facing; the sequence is LSLILEYTWLEA. Residues 321-338 form a helical membrane-spanning segment; the sequence is VIFLIGIIVANVPEGLLA. Residues 339-772 lie on the Cytoplasmic side of the membrane; sequence TVTVCLTLTA…EEGRLIFDNL (434 aa). Catalysis depends on D376, which acts as the 4-aspartylphosphate intermediate. Residues S452 and S484 each carry the phosphoserine modification. K487 is an ATP binding site. Position 542 is a phosphotyrosine (Y542). Positions 596–717 are mediates interaction with SCN7A; that stretch reads RAAVPDAVGK…QGAIVAVTGD (122 aa). The residue at position 661 (K661) is an N6-succinyllysine. Phosphoserine is present on residues S668 and S675. Mg(2+) contacts are provided by D717 and D721. A helical membrane pass occupies residues 773–792; that stretch reads KKSIAYTLTSNIPEITPFLI. Topologically, residues 793 to 802 are extracellular; sequence FIIANIPLPL. A helical membrane pass occupies residues 803–823; sequence GTVTILCIDLGTDMVPAISLA. Residues 824–843 are Cytoplasmic-facing; that stretch reads YEQAESDIMKRQPRNPKTDK. Residues 844-866 form a helical membrane-spanning segment; sequence LVNERLISMAYGQIGMIQALGGF. The Extracellular segment spans residues 867 to 918; it reads FTYFVILAENGFLPFHLLGIRVDWDDRWINDVEDSYGQQWTYEQRKIVEFTC. Residues 919 to 938 traverse the membrane as a helical segment; it reads HTAFFVSIVVVQWADLVICK. At 939–951 the chain is on the cytoplasmic side; it reads TRRNSVFQQGMKN. Residue S943 is modified to Phosphoserine; by PKA. The helical transmembrane segment at 952 to 970 threads the bilayer; sequence KILIFGLFEETALAAFLSY. Topologically, residues 971 to 985 are extracellular; the sequence is CPGMGVALRMYPLKP. The helical transmembrane segment at 986-1006 threads the bilayer; the sequence is TWWFCAFPYSLLIFVYDEIRK. Residues 1007–1023 lie on the Cytoplasmic side of the membrane; the sequence is LIIRRRPGGWVEKETYY.

It belongs to the cation transport ATPase (P-type) (TC 3.A.3) family. Type IIC subfamily. The sodium/potassium-transporting ATPase is composed of a catalytic alpha subunit, an auxiliary non-catalytic beta subunit and an additional regulatory subunit. Interacts with regulatory subunit FXYD1. Interacts with regulatory subunit FXYD3. Interacts with SIK1. Interacts with SLC35G1 and STIM1. Interacts with CLN3; this interaction regulates the sodium/potassium-transporting ATPase complex localization at the plasma membrane. Interacts with SCN7A; activates ATP1A1 P-type sodium:potassium-exchanging transporter activity which indirectly signals to nearby neurons to regulate sodium homeostasis. Phosphorylation on Tyr-10 modulates pumping activity. Phosphorylation of Ser-943 by PKA modulates the response of ATP1A1 to PKC. Dephosphorylation by protein phosphatase 2A (PP2A) following increases in intracellular sodium, leading to increase catalytic activity. In terms of tissue distribution, expressed in endocardial endothelial cells.

The protein resides in the cell membrane. The protein localises to the basolateral cell membrane. It is found in the sarcolemma. Its subcellular location is the cell projection. It localises to the axon. The protein resides in the melanosome. The catalysed reaction is K(+)(out) + Na(+)(in) + ATP + H2O = K(+)(in) + Na(+)(out) + ADP + phosphate + H(+). In terms of biological role, this is the catalytic component of the active enzyme, which catalyzes the hydrolysis of ATP coupled with the exchange of sodium and potassium ions across the plasma membrane. This action creates the electrochemical gradient of sodium and potassium ions, providing the energy for active transport of various nutrients. Could also be part of an osmosensory signaling pathway that senses body-fluid sodium levels and controls salt intake behavior as well as voluntary water intake to regulate sodium homeostasis. The chain is Sodium/potassium-transporting ATPase subunit alpha-1 (ATP1A1) from Oryctolagus cuniculus (Rabbit).